We begin with the raw amino-acid sequence, 194 residues long: Small ribosomal subunit protein uS7 (194 aa).

Belongs to the universal ribosomal protein uS7 family. In terms of assembly, part of the 30S ribosomal subunit.

In terms of biological role, one of the primary rRNA binding proteins, it binds directly to 16S rRNA where it nucleates assembly of the head domain of the 30S subunit. Is located at the subunit interface close to the decoding center. The protein is Small ribosomal subunit protein uS7 of Methanococcus vannielii (strain ATCC 35089 / DSM 1224 / JCM 13029 / OCM 148 / SB).